Here is a 370-residue protein sequence, read N- to C-terminus: UDP-N-acetylglucosamine--N-acetylmuramyl-(pentapeptide) pyrophosphoryl-undecaprenol N-acetylglucosamine transferase (370 aa).

Residues 10–12 (TGG), Asn126, Ser200, Ile255, and Gln300 each bind UDP-N-acetyl-alpha-D-glucosamine.

The protein belongs to the glycosyltransferase 28 family. MurG subfamily.

Its subcellular location is the cell membrane. It carries out the reaction Mur2Ac(oyl-L-Ala-gamma-D-Glu-L-Lys-D-Ala-D-Ala)-di-trans,octa-cis-undecaprenyl diphosphate + UDP-N-acetyl-alpha-D-glucosamine = beta-D-GlcNAc-(1-&gt;4)-Mur2Ac(oyl-L-Ala-gamma-D-Glu-L-Lys-D-Ala-D-Ala)-di-trans,octa-cis-undecaprenyl diphosphate + UDP + H(+). The protein operates within cell wall biogenesis; peptidoglycan biosynthesis. In terms of biological role, cell wall formation. Catalyzes the transfer of a GlcNAc subunit on undecaprenyl-pyrophosphoryl-MurNAc-pentapeptide (lipid intermediate I) to form undecaprenyl-pyrophosphoryl-MurNAc-(pentapeptide)GlcNAc (lipid intermediate II). The protein is UDP-N-acetylglucosamine--N-acetylmuramyl-(pentapeptide) pyrophosphoryl-undecaprenol N-acetylglucosamine transferase of Lactobacillus gasseri (strain ATCC 33323 / DSM 20243 / BCRC 14619 / CIP 102991 / JCM 1131 / KCTC 3163 / NCIMB 11718 / NCTC 13722 / AM63).